A 514-amino-acid chain; its full sequence is MDAVKKKHWWQSPQLTWSVIGLLCLLVGYLVVLMYAQGEYLFAIMTLILSSVGLYIFSNRKAYAWRYVYPGLAGMGLFVLFPLICTIAIAFTNYSSTNQLTFERAQQVLMDRSFQAGKAYNFSLYPAGDEWQLALTDGESGKNYLSEAFKFGGEQKLALKEADALPQGERANLRVITQNRAALNQLTAVLPDESKVIMSSLRQFSGTQPLYALANDGTLTNNQSGVKYRPNADIGFYQSINADGSWGNEKLSPGYTVTIGWDNFTRVFQDEGIQKPFFAIFVWTVVFSVLTVILTVAVGMVLACLVQWEALKGKAIYRVLLILPYAVPSFISILIFKGLFNQSFGEINMMLSALFGIKPAWFSDPTTARTMIIIVNTWLGYPYMMILCMGLLKAIPDDLYEASAMDGAGPFQNFFKITLPLLIKPLTPLMIASFAFNFNNFVLIQLLTNGGPDRLGTTTPAGYTDLLVSYTYRIAFEGGGGQDFGLAAAIATLIFLLVGALAIVNLKATRMKFD.

Residues 1–12 (MDAVKKKHWWQS) are Cytoplasmic-facing. The chain crosses the membrane as a helical span at residues 13–35 (PQLTWSVIGLLCLLVGYLVVLMY). The Periplasmic portion of the chain corresponds to 36–39 (AQGE). The helical transmembrane segment at 40-57 (YLFAIMTLILSSVGLYIF) threads the bilayer. At 58-69 (SNRKAYAWRYVY) the chain is on the cytoplasmic side. The helical transmembrane segment at 70-92 (PGLAGMGLFVLFPLICTIAIAFT) threads the bilayer. Residues 93 to 283 (NYSSTNQLTF…QKPFFAIFVW (191 aa)) are Periplasmic-facing. In terms of domain architecture, ABC transmembrane type-1 spans 281 to 505 (FVWTVVFSVL…LLVGALAIVN (225 aa)). The helical transmembrane segment at 284 to 306 (TVVFSVLTVILTVAVGMVLACLV) threads the bilayer. The Cytoplasmic segment spans residues 307–318 (QWEALKGKAIYR). The helical transmembrane segment at 319-341 (VLLILPYAVPSFISILIFKGLFN) threads the bilayer. Topologically, residues 342-369 (QSFGEINMMLSALFGIKPAWFSDPTTAR) are periplasmic. A helical membrane pass occupies residues 370–392 (TMIIIVNTWLGYPYMMILCMGLL). Over 393 to 412 (KAIPDDLYEASAMDGAGPFQ) the chain is Cytoplasmic. The chain crosses the membrane as a helical span at residues 413 to 435 (NFFKITLPLLIKPLTPLMIASFA). Residues 436–483 (FNFNNFVLIQLLTNGGPDRLGTTTPAGYTDLLVSYTYRIAFEGGGGQD) lie on the Periplasmic side of the membrane. The chain crosses the membrane as a helical span at residues 484-506 (FGLAAAIATLIFLLVGALAIVNL). At 507–514 (KATRMKFD) the chain is on the cytoplasmic side.

This sequence belongs to the binding-protein-dependent transport system permease family. MalFG subfamily. As to quaternary structure, the complex is composed of two ATP-binding proteins (MalK), two transmembrane proteins (MalG and MalF) and a solute-binding protein (MalE).

The protein localises to the cell inner membrane. In terms of biological role, part of the ABC transporter complex MalEFGK involved in maltose/maltodextrin import. Probably responsible for the translocation of the substrate across the membrane. The chain is Maltose/maltodextrin transport system permease protein MalF (malF) from Klebsiella aerogenes (Enterobacter aerogenes).